Reading from the N-terminus, the 95-residue chain is Co-chaperonin GroES (95 aa).

The protein belongs to the GroES chaperonin family. In terms of assembly, heptamer of 7 subunits arranged in a ring. Interacts with the chaperonin GroEL.

Its subcellular location is the cytoplasm. In terms of biological role, together with the chaperonin GroEL, plays an essential role in assisting protein folding. The GroEL-GroES system forms a nano-cage that allows encapsulation of the non-native substrate proteins and provides a physical environment optimized to promote and accelerate protein folding. GroES binds to the apical surface of the GroEL ring, thereby capping the opening of the GroEL channel. The sequence is that of Co-chaperonin GroES from Stenotrophomonas maltophilia (strain R551-3).